A 160-amino-acid chain; its full sequence is Inorganic pyrophosphatase (160 aa).

Residues K16, R28, and Y40 each coordinate substrate. Positions 50, 55, and 87 each coordinate Mg(2+). Residue Y126 coordinates substrate.

The protein belongs to the PPase family. In terms of assembly, homohexamer. The cofactor is Mg(2+).

It localises to the cytoplasm. It catalyses the reaction diphosphate + H2O = 2 phosphate + H(+). In terms of biological role, catalyzes the hydrolysis of inorganic pyrophosphate (PPi) forming two phosphate ions. In Nanoarchaeum equitans (strain Kin4-M), this protein is Inorganic pyrophosphatase.